Reading from the N-terminus, the 88-residue chain is Phosphocarrier protein HPr (88 aa).

An HPr domain is found at 1–88 (MEQASFVVID…EVLKKEGLAE (88 aa)). H15 (pros-phosphohistidine intermediate) is an active-site residue. S46 is subject to Phosphoserine; by HPrK/P.

Belongs to the HPr family.

It is found in the cytoplasm. With respect to regulation, phosphorylation on Ser-46 inhibits the phosphoryl transfer from enzyme I to HPr. Functionally, general (non sugar-specific) component of the phosphoenolpyruvate-dependent sugar phosphotransferase system (sugar PTS). This major carbohydrate active-transport system catalyzes the phosphorylation of incoming sugar substrates concomitantly with their translocation across the cell membrane. The phosphoryl group from phosphoenolpyruvate (PEP) is transferred to the phosphoryl carrier protein HPr by enzyme I. Phospho-HPr then transfers it to the PTS EIIA domain. P-Ser-HPr interacts with the catabolite control protein A (CcpA), forming a complex that binds to DNA at the catabolite response elements cre, operator sites preceding a large number of catabolite-regulated genes. Thus, P-Ser-HPr is a corepressor in carbon catabolite repression (CCR), a mechanism that allows bacteria to coordinate and optimize the utilization of available carbon sources. P-Ser-HPr also plays a role in inducer exclusion, in which it probably interacts with several non-PTS permeases and inhibits their transport activity. The sequence is that of Phosphocarrier protein HPr (ptsH) from Listeria monocytogenes serovar 1/2a (strain ATCC BAA-679 / EGD-e).